We begin with the raw amino-acid sequence, 304 residues long: Porphobilinogen deaminase (304 aa).

Cys241 is modified (S-(dipyrrolylmethanemethyl)cysteine).

Belongs to the HMBS family. In terms of assembly, monomer. Dipyrromethane serves as cofactor.

It catalyses the reaction 4 porphobilinogen + H2O = hydroxymethylbilane + 4 NH4(+). Its pathway is porphyrin-containing compound metabolism; protoporphyrin-IX biosynthesis; coproporphyrinogen-III from 5-aminolevulinate: step 2/4. Functionally, tetrapolymerization of the monopyrrole PBG into the hydroxymethylbilane pre-uroporphyrinogen in several discrete steps. The protein is Porphobilinogen deaminase of Ruthia magnifica subsp. Calyptogena magnifica.